A 330-amino-acid chain; its full sequence is Free fatty acid receptor 2 (330 aa).

The Extracellular portion of the chain corresponds to 1 to 8 (MTPDWHSS). The helical transmembrane segment at 9–29 (LILTAYILIFLTGLPANLLAL) threads the bilayer. The Cytoplasmic segment spans residues 30-43 (RAFMGRVRQPQPAP). Residues 44-64 (VHILLLNLTLADLLLLLLLPF) form a helical membrane-spanning segment. At 65–79 (RIVEAASNFRWYLPK) the chain is on the extracellular side. A helical membrane pass occupies residues 80 to 100 (IVCALTGFGFYSSIYCSTWLL). Residues 101 to 126 (AGISMERYLGVAFPVQYKLSRRPLYG) are Cytoplasmic-facing. Residues 127 to 147 (VIAALVAWIMSFGHCTIVIIV) form a helical membrane-spanning segment. Topologically, residues 148 to 184 (QYLNSTEQVGTENQITCYENFTQEQLDVVLPVRLELC) are extracellular. Residues Asn-151 and Asn-167 are each glycosylated (N-linked (GlcNAc...) asparagine). A helical membrane pass occupies residues 185-205 (LVLFFVPMAVTIFCYWRFVWI). Topologically, residues 206 to 219 (MLTQPHVGAQRRRR) are cytoplasmic. The chain crosses the membrane as a helical span at residues 220-240 (AVGLAVVTLLNFLVCFGPYNM). Over 241–255 (SHLVGFYLRQSPSWR) the chain is Extracellular. Residues 256 to 276 (VEAVVFSSLNASLDPLLFYFS) form a helical membrane-spanning segment. Residues 277 to 330 (SSVVRRAFGKGLLLIRNPASSMLGRGAKETVEGTKMDRGGSQAEGVQSSEFVTE) lie on the Cytoplasmic side of the membrane. The segment at 306–330 (TVEGTKMDRGGSQAEGVQSSEFVTE) is disordered. The segment covering 320–330 (EGVQSSEFVTE) has biased composition (polar residues).

Belongs to the G-protein coupled receptor 1 family. Interacts with FCN1 (via Fibrinogen C-terminal domain). As to expression, highly expressed in hematopoietic tissues, such as spleen and bone marrow, with highest levels in a subset of immune cells, including monocytes or neutrophils. Expressed in adipose tissues with high expression in differentiating adipocytes. Expressed by intestinal endocrine cells.

It localises to the cell membrane. G protein-coupled receptor that is activated by a major product of dietary fiber digestion, the short chain fatty acids (SCFAs), and that plays a role in the regulation of whole-body energy homeostasis and in intestinal immunity. In omnivorous mammals, the short chain fatty acids acetate, propionate and butyrate are produced primarily by the gut microbiome that metabolizes dietary fibers. SCFAs serve as a source of energy but also act as signaling molecules. That G protein-coupled receptor is probably coupled to the pertussis toxin-sensitive, G(i/o)-alpha family of G proteins but also to the Gq family. Its activation results in the formation of inositol 1,4,5-trisphosphate, the mobilization of intracellular calcium, the phosphorylation of the MAPK3/ERK1 and MAPK1/ERK2 kinases and the inhibition of intracellular cAMP accumulation. May play a role in glucose homeostasis by regulating the secretion of GLP-1, in response to short-chain fatty acids accumulating in the intestine. May also regulate the production of LEP/Leptin, a hormone acting on the central nervous system to inhibit food intake. Finally, may also regulate whole-body energy homeostasis through adipogenesis regulating both differentiation and lipid storage of adipocytes. In parallel to its role in energy homeostasis, may also mediate the activation of the inflammatory and immune responses by SCFA in the intestine, regulating the rapid production of chemokines and cytokines. May also play a role in the resolution of the inflammatory response and control chemotaxis in neutrophils. In addition to SCFAs, may also be activated by the extracellular lectin FCN1 in a process leading to activation of monocytes and inducing the secretion of interleukin-8/IL-8 in response to the presence of microbes. The protein is Free fatty acid receptor 2 (Ffar2) of Mus musculus (Mouse).